Here is a 790-residue protein sequence, read N- to C-terminus: Spermatogenesis-associated protein 20 (790 aa).

Residues 1-19 (MSHHSSPPPKHKGEHKGHG) show a composition bias toward basic residues. Residues 1 to 67 (MSHHSSPPPK…PPPAPPKTVN (67 aa)) form a disordered region. Ser5 is modified (phosphoserine). Over residues 23-36 (GSERGSSSRDKDRS) the composition is skewed to basic and acidic residues. Ser653 bears the Phosphoserine mark.

The protein resides in the secreted. May play a role in fertility regulation. This chain is Spermatogenesis-associated protein 20 (Spata20), found in Mus musculus (Mouse).